The following is a 238-amino-acid chain: Tetraspanin-4 (238 aa).

The Cytoplasmic portion of the chain corresponds to 1-13 (MARACLQAVKYLM). The chain crosses the membrane as a helical span at residues 14-34 (FAFNLLFWLGGCGVLGVGIWL). At 35-55 (AATQGSFATLSSSFPSLSAAN) the chain is on the extracellular side. Residues 56 to 76 (LLIITGAFVMAIGFVGCLGAI) form a helical membrane-spanning segment. Over 77–85 (KENKCLLLT) the chain is Cytoplasmic. A helical transmembrane segment spans residues 86 to 106 (FFLLLLLVFLLEATIAILFFA). Residues 107–201 (YTDKIDRYAQ…ETVKVWLQEN (95 aa)) lie on the Extracellular side of the membrane. N152 and N161 each carry an N-linked (GlcNAc...) asparagine glycan. The chain crosses the membrane as a helical span at residues 202–222 (LLAVGIFGLCTALVQILGLTF). Residues 223–238 (AMTMYCQVVKADTYCA) are Cytoplasmic-facing.

It belongs to the tetraspanin (TM4SF) family. In terms of assembly, forms a complex with integrins.

It localises to the membrane. The protein is Tetraspanin-4 (TSPAN4) of Pongo abelii (Sumatran orangutan).